Reading from the N-terminus, the 182-residue chain is Putative minor fimbrial subunit PmfF (182 aa).

Positions 1-22 (MKNSIIKSAITCLLLLSPSTFA) are cleaved as a signal peptide.

The protein belongs to the fimbrial protein family.

It is found in the fimbrium. This Proteus mirabilis (strain HI4320) protein is Putative minor fimbrial subunit PmfF (pmfF).